The primary structure comprises 664 residues: Threonine--tRNA ligase (664 aa).

Residues 1-64 (MSELLKITLP…TADAQLALVT (64 aa)) enclose the TGS domain. Positions 250–559 (DHRKLGNEMD…LIEHFAGRLP (310 aa)) are catalytic. Zn(2+) is bound by residues Cys-355, His-406, and His-536.

This sequence belongs to the class-II aminoacyl-tRNA synthetase family. As to quaternary structure, homodimer. It depends on Zn(2+) as a cofactor.

It localises to the cytoplasm. The catalysed reaction is tRNA(Thr) + L-threonine + ATP = L-threonyl-tRNA(Thr) + AMP + diphosphate + H(+). Catalyzes the attachment of threonine to tRNA(Thr) in a two-step reaction: L-threonine is first activated by ATP to form Thr-AMP and then transferred to the acceptor end of tRNA(Thr). Also edits incorrectly charged L-seryl-tRNA(Thr). The sequence is that of Threonine--tRNA ligase from Novosphingobium aromaticivorans (strain ATCC 700278 / DSM 12444 / CCUG 56034 / CIP 105152 / NBRC 16084 / F199).